A 141-amino-acid polypeptide reads, in one-letter code: Putative pre-16S rRNA nuclease (141 aa).

This sequence belongs to the YqgF nuclease family.

It localises to the cytoplasm. Functionally, could be a nuclease involved in processing of the 5'-end of pre-16S rRNA. In Amoebophilus asiaticus (strain 5a2), this protein is Putative pre-16S rRNA nuclease.